The sequence spans 266 residues: MDASSSSNPDDGLQAIRLVDASDDEPYADAVAKIERCQEILGYDFRDLDLLRSALTHASGASHRLASNERLEFLGDSVLGLTVCEWLFNEYPEYSEGDLTKIKSAVVSRRSCGKVACKLGLDQCLIVGRGVTRNRSYPKSLVSDVFEAVIAALYIDGGPEIVRDRLKLWLAEEVNLAVDTQGSGNHKSVLQQFAQRELSATPVYKLIRETGPDHRKMFLMGAMVDDRRFAPAWGNNKKDAEQRAAANALAELHNAKVPYDSEQPPA.

One can recognise an RNase III domain in the interval 34–158; sequence IERCQEILGY…VIAALYIDGG (125 aa). Glu72 contacts Mg(2+). Residue Asp76 is part of the active site. Mg(2+) contacts are provided by Asp144 and Glu147. Glu147 is a catalytic residue. The 70-residue stretch at 185–254 folds into the DRBM domain; it reads NHKSVLQQFA…AANALAELHN (70 aa).

It belongs to the ribonuclease III family. In terms of assembly, homodimer. It depends on Mg(2+) as a cofactor.

It localises to the cytoplasm. It catalyses the reaction Endonucleolytic cleavage to 5'-phosphomonoester.. Functionally, digests double-stranded RNA. Involved in the processing of primary rRNA transcript to yield the immediate precursors to the large and small rRNAs (23S and 16S). Processes some mRNAs, and tRNAs when they are encoded in the rRNA operon. Processes pre-crRNA and tracrRNA of type II CRISPR loci if present in the organism. This chain is Ribonuclease 3, found in Rhodopirellula baltica (strain DSM 10527 / NCIMB 13988 / SH1).